A 328-amino-acid chain; its full sequence is MNLVSLENFLDNTSFLVLFLTMLVYWAGAAFPSIPLLPGLGSTGVAIANLCIAALLGARWLEAGYFPISNLYESLFFLAWGVTAVHLIAEYTSRSRLVGVVTTPVAMGITAFATLSLPGEMQTSAPLVPALKSNWLMMHVSVMMLSYAALMVGSLMAIAFLIVTRGQNIELKGSSVGTGAYRLQNKLSTTLSAPIFMETANGGTTALLTPTLTAMATLSPQRLSLAETLDNISYRVIGLGFPLLTIGIIAGAVWANEAWGSYWSWDPKETWALITWLVFAAYLHARITRGWQGRKPAILAASGFVVVWVCYLGVNLLGKGLHSYGWFF.

A run of 8 helical transmembrane segments spans residues 15-35 (FLVL…PSIP), 36-56 (LLPG…AALL), 68-88 (ISNL…VHLI), 97-117 (LVGV…TLSL), 142-162 (VMML…AFLI), 236-256 (VIGL…VWAN), 263-283 (WSWD…AAYL), and 297-317 (AILA…VNLL).

It belongs to the CcmF/CycK/Ccl1/NrfE/CcsA family. As to quaternary structure, may interact with ccs1.

It localises to the cellular thylakoid membrane. In terms of biological role, required during biogenesis of c-type cytochromes (cytochrome c6 and cytochrome f) at the step of heme attachment. The protein is Cytochrome c biogenesis protein CcsA of Microcystis aeruginosa (strain NIES-843 / IAM M-2473).